Consider the following 88-residue polypeptide: Cuticle protein 70, isoforms A and B (88 aa).

Repeat copies occupy residues 7–10, 48–51, 55–58, 60–63, and 66–69.

In terms of biological role, component of the cuticle of migratory locust which contains more than 100 different structural proteins. The sequence is that of Cuticle protein 70, isoforms A and B from Locusta migratoria (Migratory locust).